The sequence spans 520 residues: Zinc finger and BTB domain-containing protein 45 (520 aa).

A BTB domain is found at 33–96; sequence CDVTVRIREA…LYSGSLVVAQ (64 aa). Disordered regions lie at residues 182-272 and 337-372; these read PAPP…GGAG and FHLGAPGPPAPTPPTPSGPAPAPPPTFYPTLQPDAA. A compositionally biased stretch (acidic residues) spans 206–225; sequence RGEEDDDEETDEETDAEEGE. Positions 342–363 are enriched in pro residues; that stretch reads PGPPAPTPPTPSGPAPAPPPTF. C2H2-type zinc fingers lie at residues 412–434, 440–462, 468–490, and 495–517; these read YECSHCRKTFSSRKNYTKHMFIH, HQCAVCWRSFSLRDYLLKHMVTH, FQCAVCAKRFTQKSSLNVHMRTH, and APCPACGKVFSHRALLERHLAAH.

This sequence belongs to the krueppel C2H2-type zinc-finger protein family.

Its subcellular location is the nucleus. Functionally, may be involved in transcriptional regulation. In the central nervous system, may play a role in glial cell differentiation. In Mus musculus (Mouse), this protein is Zinc finger and BTB domain-containing protein 45.